The primary structure comprises 37 residues: Conotoxin Bt1.8 (37 aa).

Positions 1–20 (PDGRNAAAKAFDLITPTVRK) are excised as a propeptide. Cystine bridges form between Cys-22–Cys-28 and Cys-23–Cys-36. Cys-36 bears the Cysteine amide mark.

Belongs to the conotoxin A superfamily. In terms of tissue distribution, expressed by the venom duct.

The protein localises to the secreted. Its function is as follows. Alpha-conotoxins bind to the nicotinic acetylcholine receptors (nAChR) and inhibit them. This toxin inhibits mammalian alpha-3-beta-2/CHRNA3-CHRNB2 nAChR (IC(50)=9.4 nM (rat), IC(50)=8.8 nM (human)), as well as the subunit chimera alpha-6/alpha-3-beta-2-beta-3 nAChR (CHRNA6/CHRNA3-CHRNB2-CHRNB3)(IC(50)=2.1 nM (rat), IC(50)=1.7 nM (human)). Binds to rat alpha-6/alpha-3-beta-2-beta-3 more rapidly than to alpha-3-beta-2, and dissociates more rapidly from alpha-3-beta-2 than from alpha-6/alpha-3-beta-2-beta-3. The chain is Conotoxin Bt1.8 from Conus betulinus (Beech cone).